Here is a 155-residue protein sequence, read N- to C-terminus: SsrA-binding protein (155 aa).

This sequence belongs to the SmpB family.

Its subcellular location is the cytoplasm. Its function is as follows. Required for rescue of stalled ribosomes mediated by trans-translation. Binds to transfer-messenger RNA (tmRNA), required for stable association of tmRNA with ribosomes. tmRNA and SmpB together mimic tRNA shape, replacing the anticodon stem-loop with SmpB. tmRNA is encoded by the ssrA gene; the 2 termini fold to resemble tRNA(Ala) and it encodes a 'tag peptide', a short internal open reading frame. During trans-translation Ala-aminoacylated tmRNA acts like a tRNA, entering the A-site of stalled ribosomes, displacing the stalled mRNA. The ribosome then switches to translate the ORF on the tmRNA; the nascent peptide is terminated with the 'tag peptide' encoded by the tmRNA and targeted for degradation. The ribosome is freed to recommence translation, which seems to be the essential function of trans-translation. This Lactococcus lactis subsp. cremoris (strain MG1363) protein is SsrA-binding protein.